A 768-amino-acid polypeptide reads, in one-letter code: MTKFLGIFIVLGIGIGIGISTKQQWITVFYGVPVWKNSSVQAFCMTPTTRLWATTNCIPDDHDYTEVPLNITEPFEAWADRNPLVAQAGSNIHLLFEQTLKPCVKLSPLCIKMNCVELKGSATSTPATSTTAGTKLPCVRNKTDSNLQSCNDTIIEKEMNDEAASNCTFAMAGYIRDQKKNYSVVWNDAEIFCKRSTSHNGTKECYMIHCNDSVIKEACDKTYWDELRLRYCAPAGYALLKCNDWDYAGFKPECSNVSVVHCTTLMNTTVTTGLLLNGSYSENRTQIWQKHGVSNDSVLILLNKHYNLTVTCKRPGNKTVLPVTIMAGLVFHSQKYNTRLRQAWCHFQGNWKGAWKEVQEEIVKLPKERYQGTNDTNKIFLQRQFGDPEAANLWFNCQGEFFYCKMDWFLNYLNNLTVDADHNHCKNNAGKGRSPGPCVQRTYVACHIRSVINDWYTISKKTYAPPREGHLQCTSTVTGMTVELNYNNQNRTNVTLSPQIETIWAAELGRYKLVEITPIGFAPTEVRRYTGGQERQKRVPFVLGFLGFLGAAGTAMGAAATALTVQSQHLLAGILQQQKNLLAAVGAQQQMLKLTIWGVKNLNARVTALEKYLADQARLNAWGCAWKQVCHTTVPWTWNNTPEWNNMTWLEWEKQIEGLEGNITKQLEQAREQEEKNLDAYQKLSDWSSFWSWFDFSKWLNILKIGFLAVIGVIGLRLLYTLYTCIARVRQGYSPLSPQIHIHPWKGQPDNAGEPEEGGRTGKSKSTH.

A signal peptide spans 1-16 (MTKFLGIFIVLGIGIG). Residues 17-701 (IGISTKQQWI…SWFDFSKWLN (685 aa)) lie on the Extracellular side of the membrane. Residue Asn37 is glycosylated (N-linked (GlcNAc...) asparagine; by host). Cysteines 44 and 57 form a disulfide. 7 N-linked (GlcNAc...) asparagine; by host glycosylation sites follow: Asn70, Asn141, Asn151, Asn166, Asn181, Asn200, and Asn211. 5 cysteine pairs are disulfide-bonded: Cys103–Cys219, Cys110–Cys210, Cys115–Cys167, Cys232–Cys262, and Cys242–Cys254. The tract at residues 115–166 (CVELKGSATSTPATSTTAGTKLPCVRNKTDSNLQSCNDTIIEKEMNDEAASN) is V1. A V2 region spans residues 167–210 (CTFAMAGYIRDQKKNYSVVWNDAEIFCKRSTSHNGTKECYMIHC). Residues Asn256, Asn267, Asn277, Asn283, Asn295, Asn307, Asn317, Asn374, Asn415, Asn490, and Asn493 are each glycosylated (N-linked (GlcNAc...) asparagine; by host). The segment at 312 to 344 (CKRPGNKTVLPVTIMAGLVFHSQKYNTRLRQAW) is V3. A disulfide bond links Cys312 and Cys345. Intrachain disulfides connect Cys397/Cys473 and Cys404/Cys446. The tract at residues 404–446 (CKMDWFLNYLNNLTVDADHNHCKNNAGKGRSPGPCVQRTYVAC) is V4. A V5 region spans residues 489 to 496 (QNRTNVTL). A fusion peptide region spans residues 539–559 (VPFVLGFLGFLGAAGTAMGAA). The interval 602–618 (LNARVTALEKYLADQAR) is immunosuppression. Asn646 and Asn662 each carry an N-linked (GlcNAc...) asparagine; by host glycan. Residues 650 to 687 (LEWEKQIEGLEGNITKQLEQAREQEEKNLDAYQKLSDW) are a coiled coil. The tract at residues 683–704 (KLSDWSSFWSWFDFSKWLNILK) is MPER; binding to GalCer. Residues 702 to 722 (ILKIGFLAVIGVIGLRLLYTL) traverse the membrane as a helical segment. Residues 723-768 (YTCIARVRQGYSPLSPQIHIHPWKGQPDNAGEPEEGGRTGKSKSTH) are Cytoplasmic-facing. Positions 733-736 (YSPL) match the YXXL motif; contains endocytosis signal motif. The tract at residues 744–768 (PWKGQPDNAGEPEEGGRTGKSKSTH) is disordered.

The mature envelope protein (Env) consists of a homotrimer of non-covalently associated gp120-gp41 heterodimers. The resulting complex protrudes from the virus surface as a spike. Interacts with host CD4 and CCR5. Gp120 also interacts with the C-type lectins CD209/DC-SIGN and CLEC4M/DC-SIGNR (collectively referred to as DC-SIGN(R)). In terms of assembly, the mature envelope protein (Env) consists of a homotrimer of non-covalently associated gp120-gp41 heterodimers. The resulting complex protrudes from the virus surface as a spike. In terms of processing, specific enzymatic cleavages in vivo yield mature proteins. Envelope glycoproteins are synthesized as an inactive precursor that is heavily N-glycosylated and processed likely by host cell furin in the Golgi to yield the mature SU and TM proteins. The cleavage site between SU and TM requires the minimal sequence [KR]-X-[KR]-R.

Its subcellular location is the virion membrane. It is found in the host cell membrane. The protein resides in the host endosome membrane. Its function is as follows. The surface protein gp120 (SU) attaches the virus to the host lymphoid cell by binding to the primary receptor CD4. This interaction induces a structural rearrangement creating a high affinity binding site for a chemokine coreceptor like CCR5. This peculiar 2 stage receptor-interaction strategy allows gp120 to maintain the highly conserved coreceptor-binding site in a cryptic conformation, protected from neutralizing antibodies. These changes are transmitted to the transmembrane protein gp41 and are thought to activate its fusogenic potential by unmasking its fusion peptide. Functionally, surface protein gp120 (SU) may target the virus to gut-associated lymphoid tissue (GALT) by binding host ITGA4/ITGB7 (alpha-4/beta-7 integrins), a complex that mediates T-cell migration to the GALT. Interaction between gp120 and ITGA4/ITGB7 would allow the virus to enter GALT early in the infection, infecting and killing most of GALT's resting CD4+ T-cells. This T-cell depletion is believed to be the major insult to the host immune system leading to AIDS. In terms of biological role, the surface protein gp120 is a ligand for CD209/DC-SIGN and CLEC4M/DC-SIGNR, which are respectively found on dendritic cells (DCs), and on endothelial cells of liver sinusoids and lymph node sinuses. These interactions allow capture of viral particles at mucosal surfaces by these cells and subsequent transmission to permissive cells. DCs are professional antigen presenting cells, critical for host immunity by inducing specific immune responses against a broad variety of pathogens. They act as sentinels in various tissues where they take up antigen, process it, and present it to T-cells following migration to lymphoid organs. SIV subverts the migration properties of dendritic cells to gain access to CD4+ T-cells in lymph nodes. Virus transmission to permissive T-cells occurs either in trans (without DCs infection, through viral capture and transmission), or in cis (following DCs productive infection, through the usual CD4-gp120 interaction), thereby inducing a robust infection. In trans infection, bound virions remain infectious over days and it is proposed that they are not degraded, but protected in non-lysosomal acidic organelles within the DCs close to the cell membrane thus contributing to the viral infectious potential during DCs' migration from the periphery to the lymphoid tissues. On arrival at lymphoid tissues, intact virions recycle back to DCs' cell surface allowing virus transmission to CD4+ T-cells. Virion capture also seems to lead to MHC-II-restricted viral antigen presentation, and probably to the activation of SIV-specific CD4+ cells. The transmembrane protein gp41 (TM) acts as a class I viral fusion protein. Under the current model, the protein has at least 3 conformational states: pre-fusion native state, pre-hairpin intermediate state, and post-fusion hairpin state. During fusion of viral and target intracellular membranes, the coiled coil regions (heptad repeats) assume a trimer-of-hairpins structure, positioning the fusion peptide in close proximity to the C-terminal region of the ectodomain. The formation of this structure appears to drive apposition and subsequent fusion of viral and target cell membranes. Complete fusion occurs in host cell endosomes. The virus undergoes clathrin-dependent internalization long before endosomal fusion, thus minimizing the surface exposure of conserved viral epitopes during fusion and reducing the efficacy of inhibitors targeting these epitopes. Membranes fusion leads to delivery of the nucleocapsid into the cytoplasm. Its function is as follows. The envelope glycoprotein gp160 precursor down-modulates cell surface CD4 antigen by interacting with it in the endoplasmic reticulum and blocking its transport to the cell surface. Functionally, the gp120-gp41 heterodimer allows rapid transcytosis of the virus through CD4 negative cells such as simple epithelial monolayers of the intestinal, rectal and endocervical epithelial barriers. Both gp120 and gp41 specifically recognize glycosphingolipids galactosyl-ceramide (GalCer) or 3' sulfo-galactosyl-ceramide (GalS) present in the lipid rafts structures of epithelial cells. Binding to these alternative receptors allows the rapid transcytosis of the virus through the epithelial cells. This transcytotic vesicle-mediated transport of virions from the apical side to the basolateral side of the epithelial cells does not involve infection of the cells themselves. This chain is Envelope glycoprotein gp160 (env), found in Simian immunodeficiency virus agm.vervet (isolate AGM155) (SIV-agm.ver).